The chain runs to 379 residues: Queuine tRNA-ribosyltransferase (379 aa).

The active-site Proton acceptor is aspartate 94. Residues 94–98 (DSGGF), aspartate 148, glutamine 191, and glycine 218 each bind substrate. The interval 249–255 (GVGSPDA) is RNA binding. Aspartate 268 (nucleophile) is an active-site residue. The tract at residues 273–277 (TRIAR) is RNA binding; important for wobble base 34 recognition. Cysteine 306, cysteine 308, cysteine 311, and histidine 337 together coordinate Zn(2+).

This sequence belongs to the queuine tRNA-ribosyltransferase family. Homodimer. Within each dimer, one monomer is responsible for RNA recognition and catalysis, while the other monomer binds to the replacement base PreQ1. Zn(2+) is required as a cofactor.

It carries out the reaction 7-aminomethyl-7-carbaguanine + guanosine(34) in tRNA = 7-aminomethyl-7-carbaguanosine(34) in tRNA + guanine. The protein operates within tRNA modification; tRNA-queuosine biosynthesis. In terms of biological role, catalyzes the base-exchange of a guanine (G) residue with the queuine precursor 7-aminomethyl-7-deazaguanine (PreQ1) at position 34 (anticodon wobble position) in tRNAs with GU(N) anticodons (tRNA-Asp, -Asn, -His and -Tyr). Catalysis occurs through a double-displacement mechanism. The nucleophile active site attacks the C1' of nucleotide 34 to detach the guanine base from the RNA, forming a covalent enzyme-RNA intermediate. The proton acceptor active site deprotonates the incoming PreQ1, allowing a nucleophilic attack on the C1' of the ribose to form the product. After dissociation, two additional enzymatic reactions on the tRNA convert PreQ1 to queuine (Q), resulting in the hypermodified nucleoside queuosine (7-(((4,5-cis-dihydroxy-2-cyclopenten-1-yl)amino)methyl)-7-deazaguanosine). In Macrococcus caseolyticus (strain JCSC5402) (Macrococcoides caseolyticum), this protein is Queuine tRNA-ribosyltransferase.